Reading from the N-terminus, the 244-residue chain is Probable ABC transporter ATP-binding protein p29 (244 aa).

In terms of domain architecture, ABC transporter spans 6-241 (LVFDQVSLRY…KLTKQKLMQI (236 aa)). 38–45 (GKSGVGKT) provides a ligand contact to ATP.

It belongs to the ABC transporter superfamily.

Its function is as follows. Part of a high-affinity transport system. This is Probable ABC transporter ATP-binding protein p29 (p29) from Mycoplasma pneumoniae (strain ATCC 29342 / M129 / Subtype 1) (Mycoplasmoides pneumoniae).